We begin with the raw amino-acid sequence, 106 residues long: Nucleoid-associated protein Smal_0858 (106 aa).

The disordered stretch occupies residues 81–106 (IDAESKSKMGSATAGMQLPPGMKLPF).

It belongs to the YbaB/EbfC family. As to quaternary structure, homodimer.

The protein localises to the cytoplasm. It localises to the nucleoid. Binds to DNA and alters its conformation. May be involved in regulation of gene expression, nucleoid organization and DNA protection. This is Nucleoid-associated protein Smal_0858 from Stenotrophomonas maltophilia (strain R551-3).